The chain runs to 294 residues: Proteasome subunit beta 1 (294 aa).

A propeptide spans 1–65 (MTADRPALRT…MESGDLAPHG (65 aa)) (removed in mature form; by autocatalysis). The active-site Nucleophile is the T66.

Belongs to the peptidase T1B family. In terms of assembly, the 20S proteasome core is composed of 14 alpha and 14 beta subunits that assemble into four stacked heptameric rings, resulting in a barrel-shaped structure. The two inner rings, each composed of seven catalytic beta subunits, are sandwiched by two outer rings, each composed of seven alpha subunits. All four combinations of alpha- and beta-subunits (beta2-alpha1, beta2-alpha2, beta1-alpha2 and beta1-alpha1) yield fully assembled and proteolytically active proteasomes. The catalytic chamber with the active sites is on the inside of the barrel. Has probably a gated structure, the ends of the cylinder being occluded by the N-termini of the alpha-subunits. Is likely capped by the proteasome-associated ATPase, ARC.

The protein resides in the cytoplasm. The catalysed reaction is Cleavage of peptide bonds with very broad specificity.. It participates in protein degradation; proteasomal Pup-dependent pathway. The formation of the proteasomal ATPase ARC-20S proteasome complex, likely via the docking of the C-termini of ARC into the intersubunit pockets in the alpha-rings, may trigger opening of the gate for substrate entry. Interconversion between the open-gate and close-gate conformations leads to a dynamic regulation of the 20S proteasome proteolysis activity. Its function is as follows. Component of the proteasome core, a large protease complex with broad specificity involved in protein degradation. The R.erythropolis proteasomes are able to cleave oligopeptides after Tyr, Phe and Leu, very poorly after Arg but not after Glu. Thus, displays chymotrypsin-like activity, low trypsin-like activity but no caspase-like activity. In Rhodococcus erythropolis (Arthrobacter picolinophilus), this protein is Proteasome subunit beta 1.